The following is a 390-amino-acid chain: Succinate--CoA ligase [ADP-forming] subunit beta (390 aa).

The ATP-grasp domain occupies 9-248 (KEILRRHKAN…ITEEDPLEVQ (240 aa)). ATP is bound by residues Lys50, 57-59 (GRG), Glu103, Ile106, and Glu111. Asn203 and Asp217 together coordinate Mg(2+). Substrate contacts are provided by residues Asn268 and 325 to 327 (GIV).

The protein belongs to the succinate/malate CoA ligase beta subunit family. Heterotetramer of two alpha and two beta subunits. Mg(2+) is required as a cofactor.

It carries out the reaction succinate + ATP + CoA = succinyl-CoA + ADP + phosphate. The catalysed reaction is GTP + succinate + CoA = succinyl-CoA + GDP + phosphate. It participates in carbohydrate metabolism; tricarboxylic acid cycle; succinate from succinyl-CoA (ligase route): step 1/1. Functionally, succinyl-CoA synthetase functions in the citric acid cycle (TCA), coupling the hydrolysis of succinyl-CoA to the synthesis of either ATP or GTP and thus represents the only step of substrate-level phosphorylation in the TCA. The beta subunit provides nucleotide specificity of the enzyme and binds the substrate succinate, while the binding sites for coenzyme A and phosphate are found in the alpha subunit. The protein is Succinate--CoA ligase [ADP-forming] subunit beta of Leptospira borgpetersenii serovar Hardjo-bovis (strain JB197).